The sequence spans 147 residues: Small ribosomal subunit protein uS9 (147 aa).

A disordered region spans residues 128–147; the sequence is KERKKYGQMGARAKYRWSKR.

It belongs to the universal ribosomal protein uS9 family.

The sequence is that of Small ribosomal subunit protein uS9 (rpsI) from Aquifex aeolicus (strain VF5).